Here is a 564-residue protein sequence, read N- to C-terminus: Ubiquitin carboxyl-terminal hydrolase 39 (564 aa).

The interval 1–96 (MSSRSKRQSH…VRAKNGRVDS (96 aa)) is disordered. A compositionally biased stretch (basic and acidic residues) spans 28-39 (IKKERDREKEPE). Serine 46 carries the phosphoserine modification. Lysine 51 participates in a covalent cross-link: Glycyl lysine isopeptide (Lys-Gly) (interchain with G-Cter in SUMO2). The span at 59–69 (REVPAPALPVV) shows a compositional bias: low complexity. A Phosphoserine modification is found at serine 81. Basic and acidic residues predominate over residues 84 to 96 (EREVRAKNGRVDS). A UBP-type; degenerate zinc finger spans residues 102–199 (RHCPYLDTIN…YVLKPTFTKQ (98 aa)). Zn(2+)-binding residues include cysteine 135, cysteine 138, histidine 154, and histidine 160. One can recognise a USP domain in the interval 224–554 (VGLNNIKAND…EAYIQIWKRR (331 aa)).

Belongs to the peptidase C19 family. The U4/U6-U5 tri-snRNP complex is a building block of the precatalytic spliceosome (spliceosome B complex). Component of the U4/U6-U5 tri-snRNP complex composed of the U4, U6 and U5 snRNAs and at least PRPF3, PRPF4, PRPF6, PRPF8, PRPF31, SNRNP200, TXNL4A, SNRNP40, SNRPB, SNRPD1, SNRPD2, SNRPD3, SNRPE, SNRPF, SNRPG, DDX23, CD2BP2, PPIH, SNU13, EFTUD2, SART1 and USP39, plus LSM2, LSM3, LSM4, LSM5, LSM6, LSM7 and LSM8.

Its subcellular location is the nucleus. It carries out the reaction Thiol-dependent hydrolysis of ester, thioester, amide, peptide and isopeptide bonds formed by the C-terminal Gly of ubiquitin (a 76-residue protein attached to proteins as an intracellular targeting signal).. Its function is as follows. Deubiquitinating enzyme that plays a role in many cellular processes including cellular antiviral response, epithelial morphogenesis, DNA repair or B-cell development. Plays a role in pre-mRNA splicing as a component of the U4/U6-U5 tri-snRNP, one of the building blocks of the precatalytic spliceosome. Specifically regulates immunoglobulin gene rearrangement in a spliceosome-dependent manner, which involves modulating chromatin interactions at the Igh locus and therefore plays an essential role in B-cell development. Regulates AURKB mRNA levels, and thereby plays a role in cytokinesis and in the spindle checkpoint. Regulates apoptosis and G2/M cell cycle checkpoint in response to DNA damage by deubiquitinating and stabilizing CHK2. Also plays an important role in DNA repair by controlling the recruitment of XRCC4/LIG4 to DNA double-strand breaks for non-homologous end-joining repair. Participates in antiviral activity by affecting the type I IFN signaling by stabilizing STAT1 and decreasing its 'Lys-6'-linked ubiquitination. Contributes to non-canonical Wnt signaling during epidermal differentiation. Acts as a negative regulator NF-kappa-B activation through deubiquitination of 'Lys-48'-linked ubiquitination of NFKBIA. The chain is Ubiquitin carboxyl-terminal hydrolase 39 from Mus musculus (Mouse).